Reading from the N-terminus, the 436-residue chain is MLWMLARAVAFRRPGRGLAGGRGLWTGRPQSDCDSMKPLEGVRILDLTRVLAGPFATMNLGDLGAEVIKVERPGAGDDTRSWGPPFVNTESTYFLSVNRNKKSIAVNIKDPRGVRIVKELAAICDVFVENYVPGKLSEMGLGYEDIDKIAPHIIYCSITGYGQTGPMSHRAGYDAIASAMSGLMHITGPEDGDPVRPGVAMTDLATGLFAYGAIMAGLLQRYRTGKGLFIDCNLLSSQVACLTQVAANYLIGQKEAKRWGTAHGSIVPYQAFKTKDGYLVIGAGNNQQFAVVCKILNLPELIDDCKYRTNHLRVQNRKELVKILSARFAEEVTAKWLCLFEGSGIPYGPINSLKDVFSEAQVLHNGLVMEMNHPTVGKISVPGPAVRYSKFKMSEAKPPPLLGQHTRHILKEVLRYDEGAIEKLLCSGVIEQHETK.

The transit peptide at 1 to 8 directs the protein to the mitochondrion; the sequence is MLWMLARA. Asp-203 serves as the catalytic Nucleophile. N6-acetyllysine is present on residues Lys-392 and Lys-423.

This sequence belongs to the CoA-transferase III family.

Its subcellular location is the mitochondrion. It catalyses the reaction glutarate + succinyl-CoA = glutaryl-CoA + succinate. The catalysed reaction is 3-hydroxy-3-methylglutarate + succinyl-CoA = (3S)-3-hydroxy-3-methylglutaryl-CoA + succinate. It carries out the reaction 3-hydroxy-3-methylglutarate + glutaryl-CoA = (3S)-3-hydroxy-3-methylglutaryl-CoA + glutarate. The enzyme catalyses hexanedioate + glutaryl-CoA = hexanedioyl-CoA + glutarate. It catalyses the reaction itaconate + glutaryl-CoA = itaconyl-CoA + glutarate. The catalysed reaction is itaconate + succinyl-CoA = itaconyl-CoA + succinate. Functionally, coenzyme A (CoA) transferase that reversibly catalyzes the transfer of a CoA moiety from a dicarboxyl-CoA to a dicarboxylate in a metabolite recycling process. Displays preference for succinyl-CoA and glutarate-CoA as dicarboxyl-CoA donors and glutarate, succinate, adipate/hexanedioate, itaconate and 3-hydroxy-3-methylglutarate as dicarboxylate acceptors. Acts on intermediates or end products of lysine and tryptophan degradation pathway, in particular catalyzes succinyl-CoA-dependent reesterification of free glutarate into glutaryl-CoA to prevent renal excretion of glutarate. Upon inflammation, may convert macrophage-derived itaconate to itaconyl-CoA in erythroid precursors where it negatively regulates the TCA cycle and heme synthesis to limit erythroid differentiation in the context of stress erythropoiesis. The polypeptide is Succinyl-CoA:glutarate CoA-transferase (Mus musculus (Mouse)).